A 101-amino-acid chain; its full sequence is Small ribosomal subunit protein uS14 (101 aa).

It belongs to the universal ribosomal protein uS14 family. Part of the 30S ribosomal subunit. Contacts proteins S3 and S10.

Functionally, binds 16S rRNA, required for the assembly of 30S particles and may also be responsible for determining the conformation of the 16S rRNA at the A site. In Photobacterium profundum (strain SS9), this protein is Small ribosomal subunit protein uS14.